We begin with the raw amino-acid sequence, 583 residues long: Putative rhophilin-2-like protein RHPN2P1 (583 aa).

In terms of domain architecture, BRO1 spans 26–375 (PLIPLGLKET…RLTYAQHQED (350 aa)). The 79-residue stretch at 412 to 490 (RSNRFTAEEG…DEIEMKVVSL (79 aa)) folds into the PDZ domain.

The chain is Putative rhophilin-2-like protein RHPN2P1 (RHPN2P1) from Homo sapiens (Human).